A 357-amino-acid chain; its full sequence is NADH-quinone oxidoreductase subunit H (357 aa).

A run of 8 helical transmembrane segments spans residues 20 to 40 (WLLVWTLVKIVAVVLPLMGCV), 92 to 112 (ALFVIAPIMTIMPALAAWAVI), 127 to 147 (LLFVMAITSLEVYGVIVAGWA), 165 to 185 (ISYEIAMGFVLVIVLMVSGSL), 203 to 223 (GLTFLSWNWLPLLPMFVIYII), 259 to 279 (FFLAEYANMILISMMATLMFL), 294 to 314 (IPGWIWLGIKTLFVVTLFIWF), and 329 to 349 (LGWKVFIPLTLVYLLIVAIWM).

It belongs to the complex I subunit 1 family. NDH-1 is composed of 14 different subunits. Subunits NuoA, H, J, K, L, M, N constitute the membrane sector of the complex.

It is found in the cell inner membrane. The catalysed reaction is a quinone + NADH + 5 H(+)(in) = a quinol + NAD(+) + 4 H(+)(out). NDH-1 shuttles electrons from NADH, via FMN and iron-sulfur (Fe-S) centers, to quinones in the respiratory chain. The immediate electron acceptor for the enzyme in this species is believed to be ubiquinone. Couples the redox reaction to proton translocation (for every two electrons transferred, four hydrogen ions are translocated across the cytoplasmic membrane), and thus conserves the redox energy in a proton gradient. This subunit may bind ubiquinone. This Herminiimonas arsenicoxydans protein is NADH-quinone oxidoreductase subunit H.